Consider the following 366-residue polypeptide: MTPEHLPTEQYDAQLAEKVARLQSMMAPFSGLVPEVFRSPASHYRMRAEFRLWHDGDDLYHIMFDQQTKSRIRVDSFPAASQLINTLMKAMIAGVRDNHALRHKLFQIDYLTTLSNQAVVSLLYHKKLDEEWREAATALRDALRAQGLNVHLIGRATKTKIELDQDYIDERLPVAGKEMIYRQVENSFTQPNAAMNIQMLEWALEVTKDSKGDLLELYCGNGNFSLALARNFNRVLATEIAKPSVAAAQYNIAANHIDNVQIIRMAAEEFTQAMNGVREFNRLQGIDLKRYQCETIFVDPPRSGLDSETEKMVQAYPRILYISCNPETLCKNLETLSQTHTVSRLALFDQFPYTHHMECGVLLTAK.

Residues glutamine 190, tyrosine 218, asparagine 223, glutamate 239, and aspartate 299 each contribute to the S-adenosyl-L-methionine site. Residue cysteine 324 is the Nucleophile of the active site. Glutamate 358 functions as the Proton acceptor in the catalytic mechanism.

This sequence belongs to the class I-like SAM-binding methyltransferase superfamily. RNA M5U methyltransferase family. TrmA subfamily.

The catalysed reaction is uridine(54) in tRNA + S-adenosyl-L-methionine = 5-methyluridine(54) in tRNA + S-adenosyl-L-homocysteine + H(+). It carries out the reaction uridine(341) in tmRNA + S-adenosyl-L-methionine = 5-methyluridine(341) in tmRNA + S-adenosyl-L-homocysteine + H(+). Functionally, dual-specificity methyltransferase that catalyzes the formation of 5-methyluridine at position 54 (m5U54) in all tRNAs, and that of position 341 (m5U341) in tmRNA (transfer-mRNA). The chain is tRNA/tmRNA (uracil-C(5))-methyltransferase from Salmonella arizonae (strain ATCC BAA-731 / CDC346-86 / RSK2980).